Here is a 129-residue protein sequence, read N- to C-terminus: Glycine cleavage system H protein (129 aa).

Positions 24–106 (TYTVGITEHA…YAGGWIFKIK (83 aa)) constitute a Lipoyl-binding domain. Lys65 carries the post-translational modification N6-lipoyllysine.

This sequence belongs to the GcvH family. In terms of assembly, the glycine cleavage system is composed of four proteins: P, T, L and H. It depends on (R)-lipoate as a cofactor.

In terms of biological role, the glycine cleavage system catalyzes the degradation of glycine. The H protein shuttles the methylamine group of glycine from the P protein to the T protein. This Escherichia coli O139:H28 (strain E24377A / ETEC) protein is Glycine cleavage system H protein.